Reading from the N-terminus, the 89-residue chain is Sec translocon accessory complex subunit YrbF (89 aa).

Residues 4–24 (GTLGTLVPIILMFAVLYFLLI) form a helical membrane-spanning segment.

The protein belongs to the YajC family. In terms of assembly, part of the SecDF-YidC-YajC translocase complex. The SecDF-YidC-YajC translocase forms a supercomplex with SecYEG, called the holo-translocon (HTL).

The protein resides in the cell membrane. In terms of biological role, the SecYEG-SecDF-YajC-YidC holo-translocon (HTL) protein secretase/insertase is a supercomplex required for protein secretion, insertion of proteins into membranes, and assembly of membrane protein complexes. While the SecYEG complex is essential for assembly of a number of proteins and complexes, the SecDF-YajC-YidC subcomplex facilitates these functions. The chain is Sec translocon accessory complex subunit YrbF (yrbF) from Bacillus subtilis (strain 168).